Consider the following 299-residue polypeptide: N-acetylaspartate synthetase (299 aa).

A compositionally biased stretch (pro residues) spans 44–57 (AAPGPAAAPPPAAG). Residues 44–70 (AAPGPAAAPPPAAGPQPHGGTGGAGPP) form a disordered region. Residues 60 to 70 (PHGGTGGAGPP) show a composition bias toward gly residues. Residues 118-138 (YALLAALCFAVTRSLLLTCLV) traverse the membrane as a helical segment. The N-acetyltransferase domain maps to 143-280 (LALRYYYSRK…VLPGMTLSLA (138 aa)).

The protein belongs to the NAT8 family. Expressed in brain, kidney, liver and spleen. In brain, present in neurons but not in astrocytes (at protein level). Expressed in brain, thymus and spleen.

Its subcellular location is the cytoplasm. The protein localises to the microsome membrane. It localises to the mitochondrion membrane. It is found in the endoplasmic reticulum membrane. The catalysed reaction is L-aspartate + acetyl-CoA = N-acetyl-L-aspartate + CoA + H(+). Aminooxyacetic acid (AOAA) blocks its activity in both cytoplasm and mitochondria. In terms of biological role, catalyzes the synthesis of N-acetylaspartate acid (NAA) from L-aspartate and acetyl-CoA. Promotes dopamine uptake by regulating TNF-alpha expression. Attenuates methamphetamine-induced inhibition of dopamine uptake. In Mus musculus (Mouse), this protein is N-acetylaspartate synthetase (Nat8l).